Reading from the N-terminus, the 221-residue chain is Transmembrane protein 225B (221 aa).

A run of 4 transmembrane segments spans residues 14–34, 77–97, 109–129, and 147–167; these read WAIVPALTSLGYLIILVVSIF, VFLLSAVFLAFVTTFIMMPFA, FVLACISFFTGACAFLALVLH, and VLWPYYVLGFGIFLFIVAGTI.

It localises to the membrane. The polypeptide is Transmembrane protein 225B (Homo sapiens (Human)).